The sequence spans 204 residues: CASP-like protein 2U1 (204 aa).

The Cytoplasmic portion of the chain corresponds to 1-36 (MGVLGGDAHVPIGSQVSPGSVVVTNNESFGHRKLLK). The helical transmembrane segment at 37-57 (GVDFLVRIKAFAFCLAVIVLL) threads the bilayer. The Extracellular portion of the chain corresponds to 58–84 (KNNVQTTVIAPGIVLQAKYNNTKAPVS). An N-linked (GlcNAc...) asparagine glycan is attached at N77. The helical transmembrane segment at 85–105 (LLVLASICCGYAFLQAVVSLL) threads the bilayer. The Cytoplasmic segment spans residues 106-117 (SFIRDKRVLNNT). A helical transmembrane segment spans residues 118 to 138 (VLAWLTFLLDQVLTYLLLGSA). The Extracellular segment spans residues 139–170 (AATAEAAYIAKRGEDKVQWKAVCGPFKRFCDH). A helical membrane pass occupies residues 171 to 191 (FAATVFLSFIAVIAFAVSAAI). Residues 192–204 (SAYYLFRRSKGFK) are Cytoplasmic-facing.

Belongs to the Casparian strip membrane proteins (CASP) family. Homodimer and heterodimers.

The protein localises to the cell membrane. The polypeptide is CASP-like protein 2U1 (Selaginella moellendorffii (Spikemoss)).